Here is a 1755-residue protein sequence, read N- to C-terminus: Transposon Ty1-MR1 Gag-Pol polyprotein (1755 aa).

Composition is skewed to polar residues over residues 1 to 31, 46 to 60, and 137 to 168; these read MESQQLSQHSPISHGSACASVTSKEVQTTQD, VSTQANSQQPTTPLS, and VGTHLNTPSPESGNSFPDSSSAKSNMTSTNQH. Disordered stretches follow at residues 1–88, 137–174, and 350–420; these read MESQ…YPQQ, VGTHLNTPSPESGNSFPDSSSAKSNMTSTNQHVRPPPI, and QQES…IRGS. The RNA-binding stretch occupies residues 299 to 401; that stretch reads NNGIPINNKV…NSQSRTARAH (103 aa). The segment covering 363–372 has biased composition (basic and acidic residues); sequence SPSDEKKDSR. The span at 373–411 shows a compositional bias: polar residues; the sequence is TYTNTTKPKSITRNSQKPNNSQSRTARAHNVSTFNNSPG. Aspartate 461 acts as the For protease activity; shared with dimeric partner in catalysis. An integrase-type zinc finger-like region spans residues 583 to 640; that stretch reads NVHTSESTRKYPYPFIHRMLAHANAQTIRYSLKNNTITYFNESDVDWSSAIDYQCPDC. The Integrase catalytic domain maps to 660–835; sequence NSYEPFQYLH…AGLDISTLLP (176 aa). Residues aspartate 671 and aspartate 736 each coordinate Mg(2+). Residues 958–1172 form a disordered region; the sequence is AVSPTDSTPP…LGGIGDSNAY (215 aa). Positions 960–969 are enriched in low complexity; that stretch reads SPTDSTPPST. A compositionally biased stretch (polar residues) spans 1005-1015; it reads STPQISDIEST. Positions 1038-1053 are enriched in basic and acidic residues; it reads ESSHASKSKDFRHSDS. Polar residues-rich tracts occupy residues 1054–1082 and 1095–1106; these read YSDNETNHTNVPISSTGGTNNKTVPQTSE and SIDTSSSESNSL. A Bipartite nuclear localization signal motif is present at residues 1178 to 1212; the sequence is KKRSLEDNETEIKVSRDTWNTKNMRSLEPPRSKKR. The region spanning 1338–1476 is the Reverse transcriptase Ty1/copia-type domain; sequence NNYYITQLDI…DILGLEIKYQ (139 aa). Positions 1346, 1427, 1428, 1610, 1652, and 1685 each coordinate Mg(2+). An RNase H Ty1/copia-type domain is found at 1610–1752; sequence DASYGNQPYY…IKTFKLLTNK (143 aa).

The capsid protein forms a homotrimer, from which the VLPs are assembled. The protease is a homodimer, whose active site consists of two apposed aspartic acid residues. Initially, virus-like particles (VLPs) are composed of the structural unprocessed proteins Gag and Gag-Pol, and also contain the host initiator methionine tRNA (tRNA(i)-Met) which serves as a primer for minus-strand DNA synthesis, and a dimer of genomic Ty RNA. Processing of the polyproteins occurs within the particle and proceeds by an ordered pathway, called maturation. First, the protease (PR) is released by autocatalytic cleavage of the Gag-Pol polyprotein yielding capsid protein p45 and a Pol-p154 precursor protein. This cleavage is a prerequisite for subsequent processing of Pol-p154 at the remaining sites to release the mature structural and catalytic proteins. Maturation takes place prior to the RT reaction and is required to produce transposition-competent VLPs.

The protein resides in the cytoplasm. The protein localises to the nucleus. It catalyses the reaction DNA(n) + a 2'-deoxyribonucleoside 5'-triphosphate = DNA(n+1) + diphosphate. It carries out the reaction Endonucleolytic cleavage to 5'-phosphomonoester.. Functionally, capsid protein (CA) is the structural component of the virus-like particle (VLP), forming the shell that encapsulates the retrotransposons dimeric RNA genome. The particles are assembled from trimer-clustered units and there are holes in the capsid shells that allow for the diffusion of macromolecules. CA also has nucleocapsid-like chaperone activity, promoting primer tRNA(i)-Met annealing to the multipartite primer-binding site (PBS), dimerization of Ty1 RNA and initiation of reverse transcription. Its function is as follows. The aspartyl protease (PR) mediates the proteolytic cleavages of the Gag and Gag-Pol polyproteins after assembly of the VLP. Reverse transcriptase/ribonuclease H (RT) is a multifunctional enzyme that catalyzes the conversion of the retro-elements RNA genome into dsDNA within the VLP. The enzyme displays a DNA polymerase activity that can copy either DNA or RNA templates, and a ribonuclease H (RNase H) activity that cleaves the RNA strand of RNA-DNA heteroduplexes during plus-strand synthesis and hydrolyzes RNA primers. The conversion leads to a linear dsDNA copy of the retrotransposon that includes long terminal repeats (LTRs) at both ends. In terms of biological role, integrase (IN) targets the VLP to the nucleus, where a subparticle preintegration complex (PIC) containing at least integrase and the newly synthesized dsDNA copy of the retrotransposon must transit the nuclear membrane. Once in the nucleus, integrase performs the integration of the dsDNA into the host genome. The polypeptide is Transposon Ty1-MR1 Gag-Pol polyprotein (TY1B-MR1) (Saccharomyces cerevisiae (strain ATCC 204508 / S288c) (Baker's yeast)).